Here is a 670-residue protein sequence, read N- to C-terminus: MINVMNPMKGGTEKGLDPQLWHACAGGMVRMPPMNSKVFYFPQGHAENAYDCVDFGNLPIPPMVLCRVLAIKYMADAESDEVFAKLRLIPLKDDEYVDHEYGDGEDSNGFESNSEKTPSFAKTLTQSDANNGGGFSVPRYCAETIFPRLDYNAEPPVQTILAKDVHGDVWKFRHIYRGTPRRHLLTTGWSNFVNQKKLVAGDSIVFMRAENGDLCVGIRRAKRGGIGNGPEYSAGWNPIGGSCGYSSLLREDESNSLRRSNCSLADRKGKVTAESVIEAATLAISGRPFEVVYYPRASTSEFCVKALDARAAMRIPWCSGMRFKMAFETEDSSRISWFMGTVSAVNVSDPIRWPNSPWRLLQVAWDEPDLLQNVKRVNPWLVELVSNVHPIPLTSFSPPRKKMRLPQHPDYNNLINSIPVPSFPSNPLIRSSPLSSVLDNVPVGLQGARHNAHQYYGLSSSDLHHYYLNRPPPPPPPSSLQLSPSLGLRNIDTKNEKGFCFLTMGTTPCNDTKSKKSHIVLFGKLILPEEQLSEKGSTDTANIEKTQISSGGSNQNGVAGREFSSSDEGSPCSKKVHDASGLETGHCKVFMESDDVGRTLDLSVLGSYEELSRKLSDMFGIKKSEMLSSVLYRDASGAIKYAGNEPFSEFLKTARRLTILTEQGSESVVV.

The segment at residues 120–222 (FAKTLTQSDA…DLCVGIRRAK (103 aa)) is a DNA-binding region (TF-B3). Polar residues predominate over residues 545 to 557 (KTQISSGGSNQNG). A disordered region spans residues 545-579 (KTQISSGGSNQNGVAGREFSSSDEGSPCSKKVHDA). Positions 584 to 664 (TGHCKVFMES…RRLTILTEQG (81 aa)) constitute a PB1 domain.

It belongs to the ARF family. As to quaternary structure, homodimers and heterodimers.

The protein resides in the nucleus. Its function is as follows. Auxin response factors (ARFs) are transcriptional factors that bind specifically to the DNA sequence 5'-TGTCTC-3' found in the auxin-responsive promoter elements (AuxREs). Could act as transcriptional activator or repressor. Formation of heterodimers with Aux/IAA proteins may alter their ability to modulate early auxin response genes expression. The sequence is that of Auxin response factor 16 (ARF16) from Arabidopsis thaliana (Mouse-ear cress).